The primary structure comprises 343 residues: Ribosomal RNA small subunit methyltransferase C (343 aa).

The protein belongs to the methyltransferase superfamily. RsmC family. In terms of assembly, monomer.

The protein localises to the cytoplasm. The catalysed reaction is guanosine(1207) in 16S rRNA + S-adenosyl-L-methionine = N(2)-methylguanosine(1207) in 16S rRNA + S-adenosyl-L-homocysteine + H(+). Specifically methylates the guanine in position 1207 of 16S rRNA in the 30S particle. The protein is Ribosomal RNA small subunit methyltransferase C of Escherichia coli O8 (strain IAI1).